The primary structure comprises 506 residues: Alpha-L-fucosidase 1 (506 aa).

The first 23 residues, 1–23 (MNSQITLFFFFFSILSLSQISNS), serve as a signal peptide directing secretion. N-linked (GlcNAc...) asparagine glycans are attached at residues asparagine 22, asparagine 82, asparagine 248, asparagine 320, asparagine 355, and asparagine 487.

This sequence belongs to the glycosyl hydrolase 29 family.

It is found in the secreted. It localises to the extracellular space. The protein localises to the apoplast. The catalysed reaction is an alpha-L-fucoside + H2O = L-fucose + an alcohol. Its function is as follows. Hydrolyzes both 3- and 4-linked fucoses in Lewis determinants. Not active on neither 2-linked fucose nor on fucose in alpha-1,3-linkage to the innermost GlcNAc. The chain is Alpha-L-fucosidase 1 (FUC1) from Arabidopsis thaliana (Mouse-ear cress).